The following is a 302-amino-acid chain: Deoxyribonuclease-1-like 1 (302 aa).

The first 18 residues, 1–18 (MHYPTALLFLILVNGAQA), serve as a signal peptide directing secretion. Catalysis depends on residues Glu97 and His148. A disulfide bridge connects residues Cys187 and Cys224. Asn261 carries N-linked (GlcNAc...) asparagine glycosylation.

The protein belongs to the DNase I family.

It is found in the endoplasmic reticulum. The polypeptide is Deoxyribonuclease-1-like 1 (DNASE1L1) (Chlorocebus aethiops (Green monkey)).